We begin with the raw amino-acid sequence, 416 residues long: uncharacterized protein (416 aa).

Zn(2+)-binding residues include histidine 29, aspartate 31, glutamate 144, histidine 215, and histidine 236.

The protein belongs to the metallo-dependent hydrolases superfamily. Peptidase M19 family. Zn(2+) serves as cofactor.

The enzyme catalyses an L-aminoacyl-L-amino acid + H2O = 2 an L-alpha-amino acid. This is an uncharacterized protein from Schizosaccharomyces pombe (strain 972 / ATCC 24843) (Fission yeast).